We begin with the raw amino-acid sequence, 176 residues long: Ubiquitin-conjugating enzyme E2-20 kDa (176 aa).

Residues 1–20 (MDSDMQNQNPHTNSKNSSSA) show a composition bias toward polar residues. The interval 1-25 (MDSDMQNQNPHTNSKNSSSAGMAVD) is disordered. Residues 28-175 (SVTKRLRSEL…LMQRYKEIDE (148 aa)) form the UBC core domain. The Glycyl thioester intermediate role is filled by Cys-113.

It belongs to the ubiquitin-conjugating enzyme family.

The catalysed reaction is S-ubiquitinyl-[E1 ubiquitin-activating enzyme]-L-cysteine + [E2 ubiquitin-conjugating enzyme]-L-cysteine = [E1 ubiquitin-activating enzyme]-L-cysteine + S-ubiquitinyl-[E2 ubiquitin-conjugating enzyme]-L-cysteine.. Its pathway is protein modification; protein ubiquitination. Functionally, catalyzes the covalent attachment of ubiquitin to other proteins. The polypeptide is Ubiquitin-conjugating enzyme E2-20 kDa (ubc11) (Schizosaccharomyces pombe (strain 972 / ATCC 24843) (Fission yeast)).